The chain runs to 355 residues: Peptide chain release factor 1 (355 aa).

Glutamine 231 is modified (N5-methylglutamine). Over residues 283–292 the composition is skewed to basic and acidic residues; sequence IAKETSERKS. Positions 283-303 are disordered; that stretch reads IAKETSERKSQVGTGDRSGRI.

This sequence belongs to the prokaryotic/mitochondrial release factor family. In terms of processing, methylated by PrmC. Methylation increases the termination efficiency of RF1.

It localises to the cytoplasm. In terms of biological role, peptide chain release factor 1 directs the termination of translation in response to the peptide chain termination codons UAG and UAA. This is Peptide chain release factor 1 from Campylobacter curvus (strain 525.92).